The primary structure comprises 135 residues: Large ribosomal subunit protein uL16c (135 aa).

It belongs to the universal ribosomal protein uL16 family. As to quaternary structure, part of the 50S ribosomal subunit.

The protein localises to the plastid. It is found in the chloroplast. The protein is Large ribosomal subunit protein uL16c of Phaseolus vulgaris (Kidney bean).